A 935-amino-acid chain; its full sequence is MSDYKDTLNLPKTSFSMKGNLANKEPMILNKWEKQGIYKKIREHFAGREKFVLHDGPPYANGSIHVGHAVNKILKDIIIKSKTLSGYDAPFTPTWDCHGLPIELQVEKKHGKAGQSISEDDFRKECRKYAKKQVEIQKKDFKRLGVLGDWEQPYLTINFDYEANMIRTLAKIIENGHLSKGFKPVHWCTDCGSALAEAEVEYADKVSPAIDVKFKIKDKDKLAQAFGLDSLNHDAFAIIWTTTPWTLPANQAIAVNNQLNYSLIKIEDFYIILAENLVEQTLKRYAIENAQIIATTTGNKLTGIMAEHPFYSRHVPILHGDHVTDDSGTGLVHTAPTHGVDDFTLGKEHNLSMEIFVKGNGCYSENTKLFAGEFIFKANDRIIELLGEKKRLMNSDKIKHSYPHCWRHKTPLMFRATPQWFISMEKQGLRDKALQAIKETSWAPSWGQARIEGMVKDRPDWCISRQRTWGVPLPLFIHKETEELHPNTIEILHKVAEKIEKDGIEAWFNADDCEFITETAQYKSVKDTLDVWFDSGSSSMCILDLDKRLSYPADLYLEGSDQHRGWFQTSLLVAMSAKGSQPYKEVFTHGFVVDEHGRKMSKSLGNVTSPQDIYNTLGADILRLWTASTDYKSEMAVSDQILKRTADTYRRLRNTARFLLSNLDGFNPVTDIIEFDKLVKLDQWAIAKTKEFQDKIIEVYDKYQTHTVAQLIHHFCSIEMGSFYLDIIKDRQYTAKTDGHPRKSAQTAIYHIVHALVRWMAPILSFTADEIWDATPKTTDLPIQLCEWYTGLKSFDQDAELDLEYWAKIQEIRSEVNRVLEIKRNEDVIKASLEAEITIYADKYNYNLLEKLGNELRFLLISSKADLKVIEESTSSSIAANIPGLLIEITKIEEPKCERCWHRSSTVGDNPQYKDICSRCVENITTEAGESREFA.

Positions 58 to 68 (PYANGSIHVGH) match the 'HIGH' region motif. Position 558 (Glu-558) interacts with L-isoleucyl-5'-AMP. The 'KMSKS' region motif lies at 599–603 (KMSKS). Lys-602 serves as a coordination point for ATP. Residues Cys-897, Cys-900, Cys-917, and Cys-920 each coordinate Zn(2+).

This sequence belongs to the class-I aminoacyl-tRNA synthetase family. IleS type 1 subfamily. In terms of assembly, monomer. It depends on Zn(2+) as a cofactor.

It is found in the cytoplasm. It catalyses the reaction tRNA(Ile) + L-isoleucine + ATP = L-isoleucyl-tRNA(Ile) + AMP + diphosphate. Its function is as follows. Catalyzes the attachment of isoleucine to tRNA(Ile). As IleRS can inadvertently accommodate and process structurally similar amino acids such as valine, to avoid such errors it has two additional distinct tRNA(Ile)-dependent editing activities. One activity is designated as 'pretransfer' editing and involves the hydrolysis of activated Val-AMP. The other activity is designated 'posttransfer' editing and involves deacylation of mischarged Val-tRNA(Ile). The chain is Isoleucine--tRNA ligase from Francisella tularensis subsp. tularensis (strain SCHU S4 / Schu 4).